Consider the following 126-residue polypeptide: Fatty acid-binding protein, liver (126 aa).

N-acetylalanine is present on alanine 2. Residues arginine 56, glutamine 57, lysine 77, histidine 99, and glutamine 101 each coordinate cholate.

The protein belongs to the calycin superfamily. Fatty-acid binding protein (FABP) family.

The protein resides in the cytoplasm. Functionally, binds free fatty acids and their coenzyme A derivatives, bilirubin, and some other small molecules in the cytoplasm. May be involved in intracellular lipid transport. Binds 2 molecules of cholate per subunit. This Gallus gallus (Chicken) protein is Fatty acid-binding protein, liver (FABP1).